A 464-amino-acid chain; its full sequence is ATP synthase subunit beta 1 (464 aa).

ATP is bound at residue 153-160 (GGAGVGKT).

It belongs to the ATPase alpha/beta chains family. In terms of assembly, F-type ATPases have 2 components, CF(1) - the catalytic core - and CF(0) - the membrane proton channel. CF(1) has five subunits: alpha(3), beta(3), gamma(1), delta(1), epsilon(1). CF(0) has three main subunits: a(1), b(2) and c(9-12). The alpha and beta chains form an alternating ring which encloses part of the gamma chain. CF(1) is attached to CF(0) by a central stalk formed by the gamma and epsilon chains, while a peripheral stalk is formed by the delta and b chains.

The protein resides in the cell inner membrane. The enzyme catalyses ATP + H2O + 4 H(+)(in) = ADP + phosphate + 5 H(+)(out). Produces ATP from ADP in the presence of a proton gradient across the membrane. The catalytic sites are hosted primarily by the beta subunits. The polypeptide is ATP synthase subunit beta 1 (Burkholderia mallei (strain SAVP1)).